Consider the following 189-residue polypeptide: MADEQTVDTQNPEANQAPEASGDDLATRVQVLEEQLAAAQDQSLRVAADLQNVRRRAEQDVEKAHKFALEKFAGDLLPIVDSLERGLELSSPDDESIRPMREGIELTLKMFHDTLTRYQLVAVSPQEGEPFNAVEHQAMAMQESADLEPNSILKVFQKGYQLNGRLLRPAMVVVSKAPAPVSPSIDEKA.

A disordered region spans residues Met1–Asp24.

Belongs to the GrpE family. As to quaternary structure, homodimer.

The protein resides in the cytoplasm. Functionally, participates actively in the response to hyperosmotic and heat shock by preventing the aggregation of stress-denatured proteins, in association with DnaK and GrpE. It is the nucleotide exchange factor for DnaK and may function as a thermosensor. Unfolded proteins bind initially to DnaJ; upon interaction with the DnaJ-bound protein, DnaK hydrolyzes its bound ATP, resulting in the formation of a stable complex. GrpE releases ADP from DnaK; ATP binding to DnaK triggers the release of the substrate protein, thus completing the reaction cycle. Several rounds of ATP-dependent interactions between DnaJ, DnaK and GrpE are required for fully efficient folding. The polypeptide is Protein GrpE (Pseudomonas fluorescens (strain Pf0-1)).